Here is a 435-residue protein sequence, read N- to C-terminus: Methylenetetrahydrofolate--tRNA-(uracil-5-)-methyltransferase TrmFO (435 aa).

9–14 serves as a coordination point for FAD; it reads GAGLAG.

Belongs to the MnmG family. TrmFO subfamily. FAD serves as cofactor.

It is found in the cytoplasm. The enzyme catalyses uridine(54) in tRNA + (6R)-5,10-methylene-5,6,7,8-tetrahydrofolate + NADH + H(+) = 5-methyluridine(54) in tRNA + (6S)-5,6,7,8-tetrahydrofolate + NAD(+). The catalysed reaction is uridine(54) in tRNA + (6R)-5,10-methylene-5,6,7,8-tetrahydrofolate + NADPH + H(+) = 5-methyluridine(54) in tRNA + (6S)-5,6,7,8-tetrahydrofolate + NADP(+). Catalyzes the folate-dependent formation of 5-methyl-uridine at position 54 (M-5-U54) in all tRNAs. The sequence is that of Methylenetetrahydrofolate--tRNA-(uracil-5-)-methyltransferase TrmFO from Staphylococcus aureus (strain MRSA252).